Reading from the N-terminus, the 71-residue chain is Transcription modulator YdgT (71 aa).

The protein belongs to the Hha/YmoA/Cnu family. Forms complexes with both H-NS and StpA.

Functionally, binds to H-NS and modified the range of genes it silences; H-NS alonge silences core gene while the H-NS-Hha complex (and presumably also H-NS-YdgT) silences genes acquired by horizontal gene transfer. Plays a role silencing virulence factors in the absence of factors that induce pathogenicity. The complex formed with H-NS binds to the specific 26-bp cnb site in the origin of replication oriC. This Salmonella choleraesuis (strain SC-B67) protein is Transcription modulator YdgT (ydgT).